The sequence spans 292 residues: 33 kDa chaperonin (292 aa).

2 disulfide bridges follow: Cys230-Cys232 and Cys263-Cys266.

This sequence belongs to the HSP33 family. In terms of processing, under oxidizing conditions two disulfide bonds are formed involving the reactive cysteines. Under reducing conditions zinc is bound to the reactive cysteines and the protein is inactive.

It is found in the cytoplasm. Redox regulated molecular chaperone. Protects both thermally unfolding and oxidatively damaged proteins from irreversible aggregation. Plays an important role in the bacterial defense system toward oxidative stress. This Salmonella choleraesuis (strain SC-B67) protein is 33 kDa chaperonin.